The chain runs to 261 residues: Uridine-cytidine kinase 2 (261 aa).

Positions 1–16 are enriched in polar residues; it reads MAGDSEQTLQNHQQPN. A disordered region spans residues 1–24; the sequence is MAGDSEQTLQNHQQPNGGEPFLIG. Alanine 2 carries the N-acetylalanine modification. 27 to 35 is a binding site for ATP; the sequence is GGTASGKSS. Positions 84, 112, 117, 166, 176, and 184 each coordinate substrate. ATP is bound at residue aspartate 213. The tract at residues 240 to 261 is disordered; it reads GYLNGYTPSRKRQASESSSRPH. Phosphoserine is present on serine 254.

This sequence belongs to the uridine kinase family. In terms of assembly, homotetramer.

It carries out the reaction uridine + ATP = UMP + ADP + H(+). The catalysed reaction is cytidine + ATP = CMP + ADP + H(+). The protein operates within pyrimidine metabolism; CTP biosynthesis via salvage pathway; CTP from cytidine: step 1/3. It functions in the pathway pyrimidine metabolism; UMP biosynthesis via salvage pathway; UMP from uridine: step 1/1. Functionally, phosphorylates uridine and cytidine to uridine monophosphate and cytidine monophosphate. Does not phosphorylate deoxyribonucleosides or purine ribonucleosides. Can use ATP or GTP as a phosphate donor. The protein is Uridine-cytidine kinase 2 (Uck2) of Mus musculus (Mouse).